The sequence spans 95 residues: uncharacterized protein (95 aa).

The span at 1 to 12 shows a compositional bias: low complexity; sequence MQNFMNNLSGGS. A disordered region spans residues 1 to 27; sequence MQNFMNNLSGGSNKEGGEKSNDFLSSA.

This is an uncharacterized protein from Schizosaccharomyces pombe (strain 972 / ATCC 24843) (Fission yeast).